We begin with the raw amino-acid sequence, 260 residues long: Thiamine thiazole synthase (260 aa).

Residues A36, 55–56, G63, and 154–156 each bind NAD(+); these read EQ and HVD. Residues D156 and H171 each contribute to the Fe cation site. NAD(+) is bound at residue M224. Residue R234 participates in glycine binding.

Belongs to the THI4 family. Homooctamer; tetramer of dimers. The cofactor is Fe(2+).

It catalyses the reaction hydrogen sulfide + glycine + NAD(+) = ADP-5-ethyl-4-methylthiazole-2-carboxylate + nicotinamide + 3 H2O + H(+). The protein operates within cofactor biosynthesis; thiamine diphosphate biosynthesis. In terms of biological role, involved in the biosynthesis of the thiazole moiety of thiamine. Catalyzes the conversion of NAD and glycine to adenosine diphosphate 5-(2-hydroxyethyl)-4-methylthiazole-2-carboxylate (ADT), an adenylated thiazole intermediate, using free sulfide as a source of sulfur. In Methanosarcina acetivorans (strain ATCC 35395 / DSM 2834 / JCM 12185 / C2A), this protein is Thiamine thiazole synthase.